The following is a 166-amino-acid chain: Lipoprotein signal peptidase (166 aa).

4 consecutive transmembrane segments (helical) span residues 9-29 (ASGA…FDQL), 45-65 (ALTS…FGFL), 71-91 (WQRW…CFLL), and 100-120 (FSLS…DRLV). Active-site residues include Asp-126 and Asp-144. A helical membrane pass occupies residues 135–155 (WHFPAFNLADSAITIGAVLLV).

This sequence belongs to the peptidase A8 family.

The protein localises to the cell inner membrane. The catalysed reaction is Release of signal peptides from bacterial membrane prolipoproteins. Hydrolyzes -Xaa-Yaa-Zaa-|-(S,diacylglyceryl)Cys-, in which Xaa is hydrophobic (preferably Leu), and Yaa (Ala or Ser) and Zaa (Gly or Ala) have small, neutral side chains.. The protein operates within protein modification; lipoprotein biosynthesis (signal peptide cleavage). This protein specifically catalyzes the removal of signal peptides from prolipoproteins. The chain is Lipoprotein signal peptidase from Burkholderia ambifaria (strain ATCC BAA-244 / DSM 16087 / CCUG 44356 / LMG 19182 / AMMD) (Burkholderia cepacia (strain AMMD)).